The primary structure comprises 319 residues: Methionyl-tRNA formyltransferase (319 aa).

110-113 (SLLP) contacts (6S)-5,6,7,8-tetrahydrofolate.

Belongs to the Fmt family.

The enzyme catalyses L-methionyl-tRNA(fMet) + (6R)-10-formyltetrahydrofolate = N-formyl-L-methionyl-tRNA(fMet) + (6S)-5,6,7,8-tetrahydrofolate + H(+). Attaches a formyl group to the free amino group of methionyl-tRNA(fMet). The formyl group appears to play a dual role in the initiator identity of N-formylmethionyl-tRNA by promoting its recognition by IF2 and preventing the misappropriation of this tRNA by the elongation apparatus. The chain is Methionyl-tRNA formyltransferase from Geobacillus thermodenitrificans (strain NG80-2).